Reading from the N-terminus, the 442-residue chain is UDP-glycosyltransferase 79B8 (442 aa).

Residues serine 260, 319-321 (VQQ), 336-344 (HCGPGTIWE), and 358-361 (LGDQ) each bind UDP-alpha-D-glucose.

This sequence belongs to the UDP-glycosyltransferase family.

The chain is UDP-glycosyltransferase 79B8 (UGT79B8) from Arabidopsis thaliana (Mouse-ear cress).